Here is a 595-residue protein sequence, read N- to C-terminus: Aspartate--tRNA(Asp/Asn) ligase (595 aa).

Glu-175 contacts L-aspartate. Residues 199-202 (QQYK) are aspartate. Residues Arg-221 and His-454 each coordinate L-aspartate. 221–223 (RDE) is a binding site for ATP. Glu-488 is an ATP binding site. Arg-495 serves as a coordination point for L-aspartate. 540-543 (GIDR) contributes to the ATP binding site.

The protein belongs to the class-II aminoacyl-tRNA synthetase family. Type 1 subfamily. In terms of assembly, homodimer.

The protein resides in the cytoplasm. It carries out the reaction tRNA(Asx) + L-aspartate + ATP = L-aspartyl-tRNA(Asx) + AMP + diphosphate. In terms of biological role, aspartyl-tRNA synthetase with relaxed tRNA specificity since it is able to aspartylate not only its cognate tRNA(Asp) but also tRNA(Asn). Reaction proceeds in two steps: L-aspartate is first activated by ATP to form Asp-AMP and then transferred to the acceptor end of tRNA(Asp/Asn). This Sinorhizobium medicae (strain WSM419) (Ensifer medicae) protein is Aspartate--tRNA(Asp/Asn) ligase.